A 117-amino-acid polypeptide reads, in one-letter code: Photosystem II reaction center Psb28 protein (117 aa).

The protein belongs to the Psb28 family. In terms of assembly, part of the photosystem II complex.

It is found in the cellular thylakoid membrane. This is Photosystem II reaction center Psb28 protein from Prochlorococcus marinus (strain AS9601).